The primary structure comprises 127 residues: uncharacterized protein (127 aa).

Disordered regions lie at residues 1–22 (MLPA…KMKG) and 53–106 (LVGK…PGPK). The span at 76–95 (PNGEAHAEQARRKISVEEKQ) shows a compositional bias: basic and acidic residues.

Its subcellular location is the mitochondrion. This is an uncharacterized protein from Arabidopsis thaliana (Mouse-ear cress).